The following is a 59-amino-acid chain: uncharacterized protein (59 aa).

This is an uncharacterized protein from Haemophilus influenzae (strain ATCC 51907 / DSM 11121 / KW20 / Rd).